A 275-amino-acid chain; its full sequence is Aldo-keto reductase MSMEG_2408/MSMEI_2347 (275 aa).

The active-site Proton donor is tyrosine 49. The NADPH site is built by leucine 189, isoleucine 227, lysine 229, serine 230, valine 231, arginine 235, serine 238, and asparagine 239. Residue lysine 262 forms an Isoglutamyl lysine isopeptide (Lys-Gln) (interchain with Q-Cter in protein Pup) linkage.

Belongs to the aldo/keto reductase family.

This is Aldo-keto reductase MSMEG_2408/MSMEI_2347 from Mycolicibacterium smegmatis (strain ATCC 700084 / mc(2)155) (Mycobacterium smegmatis).